Consider the following 196-residue polypeptide: Homeobox protein ANF-1 (196 aa).

The homeobox DNA-binding region spans 119–178 (GRRPRTAFTRNQIEVLENVFKMNSYPGIDIREELARKLDLEEDRIQIWFQNRRAKLKRSH).

This sequence belongs to the ANF homeobox family.

Its subcellular location is the nucleus. In terms of biological role, may be involved in the early patterning of the most anterior region of the main embryonic body axis. The protein is Homeobox protein ANF-1 of Gallus gallus (Chicken).